A 338-amino-acid polypeptide reads, in one-letter code: Aspartate-semialdehyde dehydrogenase (338 aa).

Residues 13 to 16 (SGAV) and 41 to 42 (RS) each bind NADP(+). A phosphate-binding site is contributed by Arg101. Cys132 serves as the catalytic Acyl-thioester intermediate. Residue Gln159 coordinates substrate. Residues 162-163 (SG) and Pro187 contribute to the NADP(+) site. Lys216 lines the phosphate pocket. Arg238 is a substrate binding site. His245 (proton acceptor) is an active-site residue. Asn317 provides a ligand contact to NADP(+).

Belongs to the aspartate-semialdehyde dehydrogenase family. In terms of assembly, homodimer.

The enzyme catalyses L-aspartate 4-semialdehyde + phosphate + NADP(+) = 4-phospho-L-aspartate + NADPH + H(+). The protein operates within amino-acid biosynthesis; L-lysine biosynthesis via DAP pathway; (S)-tetrahydrodipicolinate from L-aspartate: step 2/4. It functions in the pathway amino-acid biosynthesis; L-methionine biosynthesis via de novo pathway; L-homoserine from L-aspartate: step 2/3. It participates in amino-acid biosynthesis; L-threonine biosynthesis; L-threonine from L-aspartate: step 2/5. Its function is as follows. Catalyzes the NADPH-dependent formation of L-aspartate-semialdehyde (L-ASA) by the reductive dephosphorylation of L-aspartyl-4-phosphate. This is Aspartate-semialdehyde dehydrogenase from Shewanella sp. (strain DB6705).